An 808-amino-acid chain; its full sequence is PH domain-containing protein DDB_G0275795 (808 aa).

Positions 57–121 (ENLEILKEIK…RNRQASQQEL (65 aa)) form a coiled coil. A compositionally biased stretch (polar residues) spans 108 to 120 (ESTTRNRQASQQE). Disordered stretches follow at residues 108 to 127 (ESTT…PPIL), 228 to 325 (GANA…QDEE), 339 to 375 (EKLK…QLQS), 405 to 475 (QQQQ…NGSN), 523 to 542 (DQTK…ELKK), and 645 to 675 (KGGG…SNTD). One can recognise a PH domain in the interval 124–216 (PPILSGYLKK…WTEGLKEFKK (93 aa)). The span at 228 to 248 (GANANGNGNSSPNMSSSGSYS) shows a compositional bias: low complexity. The segment covering 255–274 (ESSQQPLNSSTGAINTTPQR) has biased composition (polar residues). Residues 293-321 (SHSSSSTAPDSPTLSSSYVPPPSSSNLNP) are compositionally biased toward low complexity. Residues 322 to 412 (QDEELKRREN…QQQQQQQQQQ (91 aa)) adopt a coiled-coil conformation. The span at 339-353 (EKLKQQDDQQQDDKQ) shows a compositional bias: basic and acidic residues. Composition is skewed to low complexity over residues 354–375 (QQQQ…QLQS) and 405–414 (QQQQQQQQPP). Residues 417 to 428 (SPQNSRHGSTNY) are compositionally biased toward polar residues. Over residues 429–449 (SQLQQQQQQPQQQPQQQSSPQ) the composition is skewed to low complexity. A compositionally biased stretch (polar residues) spans 450–475 (VIISNNNSPRFESQQQQNNFHNNGSN). Positions 487–645 (DELNKKFLKE…DKYINELLEK (159 aa)) form a coiled coil. The span at 525 to 542 (TKTDAEEKQNKSSNELKK) shows a compositional bias: basic and acidic residues. A compositionally biased stretch (low complexity) spans 654-673 (NSNNNNNSNNNNNNSNNNSN). A coiled-coil region spans residues 678–734 (KESMVAHQTQNAFLLQEIQRLETQSQFKLDIKIQQIEELENQLEQQLYQFHRFREAI).

The protein is PH domain-containing protein DDB_G0275795 of Dictyostelium discoideum (Social amoeba).